Here is a 277-residue protein sequence, read N- to C-terminus: Phosphoenolpyruvate synthase regulatory protein (277 aa).

ADP is bound at residue 157 to 164; it reads GVSRCGKT.

This sequence belongs to the pyruvate, phosphate/water dikinase regulatory protein family. PSRP subfamily.

The enzyme catalyses [pyruvate, water dikinase] + ADP = [pyruvate, water dikinase]-phosphate + AMP + H(+). It carries out the reaction [pyruvate, water dikinase]-phosphate + phosphate + H(+) = [pyruvate, water dikinase] + diphosphate. Bifunctional serine/threonine kinase and phosphorylase involved in the regulation of the phosphoenolpyruvate synthase (PEPS) by catalyzing its phosphorylation/dephosphorylation. The chain is Phosphoenolpyruvate synthase regulatory protein from Salmonella agona (strain SL483).